We begin with the raw amino-acid sequence, 1261 residues long: Rho GTPase-activating protein 29 (1261 aa).

Phosphoserine occurs at positions 171, 176, 179, and 190. In terms of domain architecture, F-BAR spans 192–462 (LELDNVLLKN…SAKLYDPGQE (271 aa)). The stretch at 296 to 418 (RKNEMEKQRK…EILAQLRTLV (123 aa)) forms a coiled coil. Residues 481–501 (NVNKHLNSSQPSGFGPANSLE) form a disordered region. Phosphoserine is present on residues serine 499, serine 519, and serine 552. The span at 541-559 (SESTGGSSESRSLDSESIS) shows a compositional bias: low complexity. The disordered stretch occupies residues 541–600 (SESTGGSSESRSLDSESISPGDFHRKLPRTPSSGTMSSADDLDEREPPSPSETGPNSLGT). The Phorbol-ester/DAG-type zinc-finger motif lies at 612-657 (THKFRKLRSPTKCRDCEGIVVFQGVECEECLLVCHRKCLENLVIIC). Residues 671–886 (AEFTQVAKKE…FLITYSQKIF (216 aa)) form the Rho-GAP domain. Phosphoserine is present on residues serine 913 and serine 949. Positions 981 to 1011 (SASQKIEDGKTPKPLSLKSDRSTNNVERHTP) are disordered. A compositionally biased stretch (basic and acidic residues) spans 998-1010 (KSDRSTNNVERHT). Phosphoserine is present on residues serine 1019, serine 1144, and serine 1146. Disordered regions lie at residues 1117–1153 (HSINATQPSKPYAEPVRSVREASERRSSDSYPLAPVR) and 1178–1238 (GNEE…VNPM). Residues 1133–1144 (RSVREASERRSS) are compositionally biased toward basic and acidic residues. Residues 1258 to 1261 (PQFV) form an interaction with PTPN13/PTPL1 region.

In terms of assembly, interacts with PTPN13/PTPL1. Interacts with RAP2A via its coiled coil domain. Interacts with RASIP1. Widely expressed. Highly expressed in skeletal muscle and heart. Expressed at intermediate level in placenta, liver and pancreas. Weakly expressed in brain, lung and kidney.

In terms of biological role, GTPase activator for the Rho-type GTPases by converting them to an inactive GDP-bound state. Has strong activity toward RHOA, and weaker activity toward RAC1 and CDC42. May act as a specific effector of RAP2A to regulate Rho. In concert with RASIP1, suppresses RhoA signaling and dampens ROCK and MYH9 activities in endothelial cells and plays an essential role in blood vessel tubulogenesis. This Homo sapiens (Human) protein is Rho GTPase-activating protein 29 (ARHGAP29).